Reading from the N-terminus, the 163-residue chain is Transcriptional repressor NrdR (163 aa).

A zinc finger lies at 3–34; that stretch reads CPSCNSESSRVVDSRSIEMGVSIRRRRECSEC. Residues 46 to 136 enclose the ATP-cone domain; it reads LLVVKRNGVT…VYKSFNCAED (91 aa).

It belongs to the NrdR family. Zn(2+) is required as a cofactor.

Functionally, negatively regulates transcription of bacterial ribonucleotide reductase nrd genes and operons by binding to NrdR-boxes. The protein is Transcriptional repressor NrdR of Corynebacterium jeikeium (strain K411).